The sequence spans 117 residues: Large ribosomal subunit protein bL19 (117 aa).

This sequence belongs to the bacterial ribosomal protein bL19 family.

Its function is as follows. This protein is located at the 30S-50S ribosomal subunit interface and may play a role in the structure and function of the aminoacyl-tRNA binding site. In Colwellia psychrerythraea (strain 34H / ATCC BAA-681) (Vibrio psychroerythus), this protein is Large ribosomal subunit protein bL19.